Reading from the N-terminus, the 602-residue chain is Elongation factor 4 (602 aa).

Residues 7–188 (ENIRNFSIIA…SIIRLVPPPK (182 aa)) enclose the tr-type G domain. GTP-binding positions include 19–24 (DHGKST) and 135–138 (NKID).

Belongs to the TRAFAC class translation factor GTPase superfamily. Classic translation factor GTPase family. LepA subfamily.

The protein resides in the cell inner membrane. It carries out the reaction GTP + H2O = GDP + phosphate + H(+). In terms of biological role, required for accurate and efficient protein synthesis under certain stress conditions. May act as a fidelity factor of the translation reaction, by catalyzing a one-codon backward translocation of tRNAs on improperly translocated ribosomes. Back-translocation proceeds from a post-translocation (POST) complex to a pre-translocation (PRE) complex, thus giving elongation factor G a second chance to translocate the tRNAs correctly. Binds to ribosomes in a GTP-dependent manner. This Chlamydia muridarum (strain MoPn / Nigg) protein is Elongation factor 4.